A 291-amino-acid polypeptide reads, in one-letter code: GTP-binding protein RHO4 (291 aa).

Positions Gly14 to Pro31 are enriched in polar residues. A disordered region spans residues Gly14–Leu45. Gly79–Thr86 contributes to the GTP binding site. Positions Tyr101–Tyr109 match the Effector region motif. GTP contacts are provided by residues Asp127–Gln131 and Leu185–Asp188. Residues Thr250–Thr273 are disordered. Ser264, Ser268, and Ser276 each carry phosphoserine. Cys288 is subject to Cysteine methyl ester. Cys288 is lipidated: S-farnesyl cysteine. Positions Ile289 to Met291 are cleaved as a propeptide — removed in mature form.

It belongs to the small GTPase superfamily. Rho family. Interacts with BEM4.

The protein resides in the cell membrane. It carries out the reaction GTP + H2O = GDP + phosphate + H(+). Functionally, plays an important role in cell growth. Required to keep the uninucleated state. May be involved in the organization of the cytoskeleton which affects microtubule functions. Most likely RHO3 and RHO4 of S.cerevisiae regulate partially overlapping but different pathways. This Saccharomyces cerevisiae (strain ATCC 204508 / S288c) (Baker's yeast) protein is GTP-binding protein RHO4 (RHO4).